The chain runs to 211 residues: Protein-L-isoaspartate O-methyltransferase (211 aa).

Ser-60 is a catalytic residue.

Belongs to the methyltransferase superfamily. L-isoaspartyl/D-aspartyl protein methyltransferase family.

It localises to the cytoplasm. It catalyses the reaction [protein]-L-isoaspartate + S-adenosyl-L-methionine = [protein]-L-isoaspartate alpha-methyl ester + S-adenosyl-L-homocysteine. Functionally, catalyzes the methyl esterification of L-isoaspartyl residues in peptides and proteins that result from spontaneous decomposition of normal L-aspartyl and L-asparaginyl residues. It plays a role in the repair and/or degradation of damaged proteins. This chain is Protein-L-isoaspartate O-methyltransferase, found in Pseudomonas fluorescens (strain SBW25).